We begin with the raw amino-acid sequence, 570 residues long: Urease subunit alpha (570 aa).

The Urease domain occupies 131 to 570 (GGFDAHIHFI…LPMAQRYFLF (440 aa)). Ni(2+) contacts are provided by His136, His138, and Lys219. An N6-carboxylysine modification is found at Lys219. Residue His221 participates in substrate binding. The Ni(2+) site is built by His248 and His274. His322 acts as the Proton donor in catalysis. Ni(2+) is bound at residue Asp362.

Belongs to the metallo-dependent hydrolases superfamily. Urease alpha subunit family. Heterotrimer of UreA (gamma), UreB (beta) and UreC (alpha) subunits. Three heterotrimers associate to form the active enzyme. It depends on Ni cation as a cofactor. Post-translationally, carboxylation allows a single lysine to coordinate two nickel ions.

The protein localises to the cytoplasm. It carries out the reaction urea + 2 H2O + H(+) = hydrogencarbonate + 2 NH4(+). It functions in the pathway nitrogen metabolism; urea degradation; CO(2) and NH(3) from urea (urease route): step 1/1. In Mesorhizobium japonicum (strain LMG 29417 / CECT 9101 / MAFF 303099) (Mesorhizobium loti (strain MAFF 303099)), this protein is Urease subunit alpha.